Reading from the N-terminus, the 462-residue chain is O-methyltransferase CTB2 (462 aa).

D289 is a binding site for S-adenosyl-L-methionine. The active-site Proton acceptor is the H340.

The protein belongs to the class I-like SAM-binding methyltransferase superfamily. Cation-independent O-methyltransferase family. COMT subfamily.

The protein operates within mycotoxin biosynthesis. In terms of biological role, O-methyltransferase; part of the gene cluster that mediates the biosynthesis of cercosporin, a light-activated, non-host-selective toxin. The perylenequinone chromophore of cercosporin absorbs light energy to attain an electronically-activated triplet state and produces active oxygen species such as the hydroxyl radical, superoxide, hydrogen peroxide or singlet oxygen upon reaction with oxygen molecules. These reactive oxygen species cause damage to various cellular components including lipids, proteins and nucleic acids. The first step of cercosporin biosynthesis is performed by the polyketide synthase CTB1 which catalyzes the formation of nor-toralactone. The starter unit acyltransferase (SAT) domain of CTB1 initiates polyketide extension by the selective utilization of acetyl-CoA, which is elongated to the heptaketide in the beta-ketoacyl synthase (KS) domain by successive condensations with six malonyl units introduced by the malonyl acyltransferase (MAT) domain. The product template (PT) domain catalyzes C4-C9 and C2-C11 aldol cyclizations and dehydrations to a trihydroxynaphthalene, which is thought to be delivered to the thioesterase (TE) domain for product release. The bifunctional enzyme CTB3 then methylates nor-toralactone to toralactone before conducting an unusual oxidative aromatic ring opening. The O-methyltransferase CTB2 further methylates the nascent OH-6 of the CBT3 product, blocking further oxidation at this site before the reductase CTB6 reduces the 2-oxopropyl ketone at position C7, giving naphthalene. The FAD-dependent monooxygenase CTB5 in concert with the multicopper oxidase CTB12 are responsible for homodimerization of naphthalene with CTB7 installing the dioxepine moiety, finally producing cercosporin. The fasciclin domain-containing protein CTB11 might act with CTB5 and CTB12 whereas the roles of CTB9 and CTB10 have still to be elucidated. The chain is O-methyltransferase CTB2 from Cercospora beticola (Sugarbeet leaf spot fungus).